The primary structure comprises 352 residues: Trifunctional sesterterpene/triterpene/sesquarterpene synthase (352 aa).

This sequence belongs to the large terpene synthase family.

It carries out the reaction (2E,6E,10E,14E)-geranylfarnesyl diphosphate = beta-geranylfarnesene + diphosphate. It catalyses the reaction all-trans-hexaprenyl diphosphate = beta-hexaprene + diphosphate. The catalysed reaction is all-trans-heptaprenyl diphosphate = beta-heptaprene + diphosphate. Functionally, catalyzes the conversion of geranylfarnesyl diphosphate (GFPP) and hexaprenyl diphosphate (HexPP) into beta-geranylfarnesene and beta-hexaprene, respectively. Also produces beta-heptaprene from heptaprenyl diphosphate (HepPP) as a minor product. The sequence is that of Trifunctional sesterterpene/triterpene/sesquarterpene synthase from Shouchella clausii (Alkalihalobacillus clausii).